Here is a 1038-residue protein sequence, read N- to C-terminus: Ubiquitin carboxyl-terminal hydrolase 36 (1038 aa).

2 disordered regions span residues 22–44 and 107–148; these read LGGNSSAGSSTDQAKSGEDTNGS and ANGH…PKPK. Over residues 23-44 the composition is skewed to polar residues; that stretch reads GGNSSAGSSTDQAKSGEDTNGS. In terms of domain architecture, USP spans 172–480; sequence TGMINVGNTC…NAYIMFFELD (309 aa). Catalysis depends on cysteine 181, which acts as the Nucleophile. Residue histidine 439 is the Proton acceptor of the active site. Disordered stretches follow at residues 487 to 794, 818 to 881, 912 to 985, and 1000 to 1038; these read PAAN…SKTG, GSPV…SNGS, LLVD…YNQN, and RFGGPGSAKFQQQRALQRHLSAGGGFSRRQPSAQQQQQT. Low complexity-rich tracts occupy residues 502-517, 546-559, and 587-606; these read STTPVPAATVSSPSPT, QQNQQSPQNGLQLG, and NGNKSSSPSSNSSSNHKSIN. Serine 513 and serine 515 each carry phosphoserine. The span at 629-641 shows a compositional bias: polar residues; that stretch reads TTAQLPSMPNMTE. Threonine 658 and threonine 662 each carry phosphothreonine. Phosphoserine is present on residues serine 672 and serine 674. Over residues 703-728 the composition is skewed to polar residues; that stretch reads TNGHSKTNGSHTNGSASSSVHVNNSK. Basic and acidic residues predominate over residues 729-746; it reads QKTDAIDEIFKSLKKSAD. Position 747 is a phosphoserine (serine 747). A compositionally biased stretch (acidic residues) spans 747 to 756; it reads SDEDDDEEEP. Over residues 766 to 776 the composition is skewed to low complexity; sequence PQKQSQSQSKA. Residues 777-786 show a composition bias toward pro residues; sequence PPSPKTPPSP. Residue serine 779 is modified to Phosphoserine. Threonine 782 is modified (phosphothreonine). Residues serine 785 and serine 819 each carry the phosphoserine modification. Threonine 825 carries the phosphothreonine modification. Positions 832-844 are enriched in polar residues; that stretch reads NPFSSSKPSTDSP. Serine 843 carries the post-translational modification Phosphoserine. Threonine 846 is modified (phosphothreonine). Over residues 859-881 the composition is skewed to polar residues; the sequence is ALKSHQQPRVGNGYQSNATSNGS. Over residues 912–923 the composition is skewed to basic and acidic residues; sequence LLVDAREQRQRD. The span at 942–953 shows a compositional bias: low complexity; it reads SGSAKGNNASNS.

The protein belongs to the peptidase C19 family. As to quaternary structure, interacts with atms/PAF1, but not with CycT. Interacts (via C-terminus) with imd (via N-terminus).

The protein resides in the nucleus. Its subcellular location is the nucleolus. The protein localises to the cytoplasm. It catalyses the reaction Thiol-dependent hydrolysis of ester, thioester, amide, peptide and isopeptide bonds formed by the C-terminal Gly of ubiquitin (a 76-residue protein attached to proteins as an intracellular targeting signal).. In terms of biological role, hydrolase that deubiquitinates polyubiquitinated target proteins including imd. Required for preventing the constitutive activation of the imd/NF-kappa-B (Imd) signaling cascade under unchalleneged conditions. Deubiquitinates imd linked 'Lys-63' chains which leads its proteasomal degradation and consequently down-regulation of the Imd signaling cascade. Removal of the activating 'Lys-63'-linked chains is likely to enable their replacement with 'Lys-48'-linked chains which act as 'tags' the for proteasomal degradation of imd. Required for maintaining multiple types of adult stem cells, including male and female germline, epithelial follicle cell and intestinal stem cells. May function as a transcriptional repressor by continually deubiquiting histone H2B at the promoters of genes critical for cellular differentiation, thereby preventing histone H3 'Lys-4' trimethylation (H3K4me3). Controls selective autophagy activation by ubiquitinated proteins. The sequence is that of Ubiquitin carboxyl-terminal hydrolase 36 (scny) from Drosophila melanogaster (Fruit fly).